Consider the following 219-residue polypeptide: UPF0502 protein Swoo_2055 (219 aa).

Positions 167–195 (QVKGESVPISEHSRSQREAPSKRQDEMDE) are disordered. The span at 177 to 191 (EHSRSQREAPSKRQD) shows a compositional bias: basic and acidic residues.

This sequence belongs to the UPF0502 family.

The polypeptide is UPF0502 protein Swoo_2055 (Shewanella woodyi (strain ATCC 51908 / MS32)).